Consider the following 206-residue polypeptide: Holliday junction branch migration complex subunit RuvA (206 aa).

The segment at 1 to 63 (MIASLRGTVI…EDAMKLYGFI (63 aa)) is domain I. The tract at residues 64–142 (DNESREMFSV…AFAAGVVDEG (79 aa)) is domain II. The flexible linker stretch occupies residues 143-153 (GEQISLPNANI). Residues 154-206 (ASEVVVEQVSQALVGLGFSEKQSDDAVSFVLAADPSLDTSGALRAALAKLSGK) form a domain III region.

The protein belongs to the RuvA family. As to quaternary structure, homotetramer. Forms an RuvA(8)-RuvB(12)-Holliday junction (HJ) complex. HJ DNA is sandwiched between 2 RuvA tetramers; dsDNA enters through RuvA and exits via RuvB. An RuvB hexamer assembles on each DNA strand where it exits the tetramer. Each RuvB hexamer is contacted by two RuvA subunits (via domain III) on 2 adjacent RuvB subunits; this complex drives branch migration. In the full resolvosome a probable DNA-RuvA(4)-RuvB(12)-RuvC(2) complex forms which resolves the HJ.

The protein localises to the cytoplasm. In terms of biological role, the RuvA-RuvB-RuvC complex processes Holliday junction (HJ) DNA during genetic recombination and DNA repair, while the RuvA-RuvB complex plays an important role in the rescue of blocked DNA replication forks via replication fork reversal (RFR). RuvA specifically binds to HJ cruciform DNA, conferring on it an open structure. The RuvB hexamer acts as an ATP-dependent pump, pulling dsDNA into and through the RuvAB complex. HJ branch migration allows RuvC to scan DNA until it finds its consensus sequence, where it cleaves and resolves the cruciform DNA. This chain is Holliday junction branch migration complex subunit RuvA, found in Corynebacterium glutamicum (strain ATCC 13032 / DSM 20300 / JCM 1318 / BCRC 11384 / CCUG 27702 / LMG 3730 / NBRC 12168 / NCIMB 10025 / NRRL B-2784 / 534).